The chain runs to 261 residues: Ribosomal RNA small subunit methyltransferase J (261 aa).

Residues 101–102 (RD), 117–118 (ER), 153–154 (SS), and aspartate 176 each bind S-adenosyl-L-methionine.

Belongs to the methyltransferase superfamily. RsmJ family.

It is found in the cytoplasm. The enzyme catalyses guanosine(1516) in 16S rRNA + S-adenosyl-L-methionine = N(2)-methylguanosine(1516) in 16S rRNA + S-adenosyl-L-homocysteine + H(+). Its function is as follows. Specifically methylates the guanosine in position 1516 of 16S rRNA. The sequence is that of Ribosomal RNA small subunit methyltransferase J from Vibrio cholerae serotype O1 (strain ATCC 39315 / El Tor Inaba N16961).